A 346-amino-acid polypeptide reads, in one-letter code: Large ribosomal subunit protein uL1c (346 aa).

The N-terminal 70 residues, 1–70, are a transit peptide targeting the chloroplast; sequence MAACATHSSL…RASNHKFIVS (70 aa). Phosphotyrosine is present on tyrosine 129. Threonine 177 carries the post-translational modification Phosphothreonine. Serine 197 bears the Phosphoserine mark.

It belongs to the universal ribosomal protein uL1 family. As to quaternary structure, part of the 50S ribosomal subunit.

It is found in the plastid. The protein localises to the chloroplast. Functionally, this protein binds directly to 23S ribosomal RNA. The chain is Large ribosomal subunit protein uL1c (RPL1) from Arabidopsis thaliana (Mouse-ear cress).